We begin with the raw amino-acid sequence, 286 residues long: Phospholipase A1 (286 aa).

The signal sequence occupies residues 1-20 (MRISLACLAALCALPAGVMA). The Periplasmic segment spans residues 21-49 (QDASVHDKPAVRGSIIANLLQDHDNPFLL). A beta stranded transmembrane segment spans residues 50 to 62 (YPYESNYLLYTWT). Residues 63–81 (SDLNKEAIRSYDWAENARK) lie on the Extracellular side of the membrane. The chain crosses the membrane as a beta stranded span at residues 82-96 (DEVKFQLSLAFPLWR). Topologically, residues 97 to 102 (GILGDN) are periplasmic. Residues 103 to 115 (SLLGASYTQKSWW) form a beta stranded membrane-spanning segment. Residues 116-125 (QLSNSKESAP) lie on the Extracellular side of the membrane. Serine 123 contacts Ca(2+). Residues 126–145 (FRETNYEPQLFLGFATDYQF) form a beta stranded membrane-spanning segment. The Periplasmic portion of the chain corresponds to 146–147 (AG). A beta stranded transmembrane segment spans residues 148-161 (WTLRDIEMGYNHDS). The active-site Proton acceptor is the histidine 159. The Nucleophile role is filled by serine 161. Over 162-170 (NGRSDPTSR) the chain is Extracellular. Arginine 164 and serine 169 together coordinate Ca(2+). Residues 171 to 183 (SWNRLYARLMAQN) traverse the membrane as a beta stranded segment. At 184-185 (GN) the chain is on the periplasmic side. Residues 186–195 (WLVEVKPWYV) form a beta stranded membrane-spanning segment. Residues 196 to 213 (VGSTDDNPDITKYMGYYR) are Extracellular-facing. Aspartate 201 provides a ligand contact to Ca(2+). The beta stranded transmembrane segment at 214-220 (LKVGYQL) threads the bilayer. Residues 221 to 222 (GE) lie on the Periplasmic side of the membrane. The chain crosses the membrane as a beta stranded span at residues 223 to 231 (AILSAQGQY). Residues 232-238 (NWNTGYG) lie on the Extracellular side of the membrane. Residues 239–247 (GAELGVSYP) traverse the membrane as a beta stranded segment. Residues 248 to 252 (ITKHV) lie on the Periplasmic side of the membrane. Residues 253–262 (RAYTQIYSGY) form a beta stranded membrane-spanning segment. Residues 263-271 (GESLIDYNF) are Extracellular-facing. A beta stranded transmembrane segment spans residues 272 to 283 (NQTRVGVGLMLN). The Periplasmic portion of the chain corresponds to 284-286 (DLF).

Belongs to the phospholipase A1 family. As to quaternary structure, homodimer; dimerization is reversible, and the dimeric form is the active one. Ca(2+) is required as a cofactor.

The protein localises to the cell outer membrane. The catalysed reaction is a 1,2-diacyl-sn-glycero-3-phosphocholine + H2O = a 2-acyl-sn-glycero-3-phosphocholine + a fatty acid + H(+). It catalyses the reaction a 1,2-diacyl-sn-glycero-3-phosphocholine + H2O = a 1-acyl-sn-glycero-3-phosphocholine + a fatty acid + H(+). In terms of biological role, hydrolysis of phosphatidylcholine with phospholipase A2 (EC 3.1.1.4) and phospholipase A1 (EC 3.1.1.32) activities. This chain is Phospholipase A1 (pldA), found in Klebsiella pneumoniae.